The primary structure comprises 242 residues: Outer membrane protein class 4 (242 aa).

The first 22 residues, 1 to 22 (MTKQLKLSALFVALLASGTAVA), serve as a signal peptide directing secretion. Tandem repeats lie at residues 69–70 (AP), 71–72 (EP), 73–74 (EP), 75–76 (EP), 77–78 (EP), 79–80 (AP), and 81–82 (AP). The tract at residues 69–82 (APEPEPEPEPAPAP) is 7 X 2 AA tandem repeats of X-P. The OmpA-like domain maps to 92 to 229 (YVDETISLSA…RVDVKIRSIV (138 aa)). A disulfide bridge links Cys-191 with Cys-214.

The protein belongs to the outer membrane OOP (TC 1.B.6) superfamily. In terms of assembly, the C-terminus exists in a monomer-dimer equilibrium.

The protein localises to the cell outer membrane. In Neisseria meningitidis serogroup B (strain ATCC BAA-335 / MC58), this protein is Outer membrane protein class 4.